Here is a 743-residue protein sequence, read N- to C-terminus: Neutral ceramidase (743 aa).

Over 1-14 (MASKSRRLSGLEIS) the chain is Cytoplasmic. The helical; Signal-anchor for type II membrane protein transmembrane segment at 15-35 (LIVLFLLMTAVSVALITVLAL) threads the bilayer. Over 36–743 (KQESDKKEEV…FKVARSFYYF (708 aa)) the chain is Lumenal. The segment at 40–60 (DKKEEVTPEEPSPSVTPPEKP) is disordered. Over residues 49–59 (EPSPSVTPPEK) the composition is skewed to pro residues. The Zn(2+) site is built by histidine 151 and histidine 260. Asparagine 265 carries N-linked (GlcNAc...) asparagine glycosylation. Serine 312 acts as the Nucleophile in catalysis. 2 disulfide bridges follow: cysteine 320–cysteine 334 and cysteine 327–cysteine 342. N-linked (GlcNAc...) asparagine glycosylation is found at asparagine 331, asparagine 389, asparagine 398, and asparagine 451. The cysteines at positions 406 and 456 are disulfide-linked. Zn(2+) is bound by residues glutamate 498 and tyrosine 538. Asparagine 661 carries N-linked (GlcNAc...) asparagine glycosylation. Residues aspartate 672, serine 674, and threonine 677 each coordinate Ca(2+). N-linked (GlcNAc...) asparagine glycosylation occurs at asparagine 720.

This sequence belongs to the neutral ceramidase family. It depends on Zn(2+) as a cofactor. Post-translationally, N-glycosylated. O-glycosylated. Detected in intestine (at protein level).

The protein resides in the cell membrane. Its subcellular location is the membrane raft. It is found in the membrane. It localises to the caveola. The protein localises to the golgi apparatus membrane. The protein resides in the mitochondrion. Its subcellular location is the secreted. It is found in the extracellular exosome. The enzyme catalyses an N-acylsphing-4-enine + H2O = sphing-4-enine + a fatty acid. It catalyses the reaction N-dodecanoylsphing-4-enine + H2O = dodecanoate + sphing-4-enine. It functions in the pathway lipid metabolism; sphingolipid metabolism. Plasma membrane ceramidase that hydrolyzes sphingolipid ceramides into sphingosine and free fatty acids at neutral pH. Ceramides, sphingosine, and its phosphorylated form sphingosine-1-phosphate are bioactive lipids that mediate cellular signaling pathways regulating several biological processes including cell proliferation, apoptosis and differentiation. Also catalyzes the reverse reaction allowing the synthesis of ceramides from fatty acids and sphingosine. Together with sphingomyelinase, participates in the production of sphingosine and sphingosine-1-phosphate from the degradation of sphingomyelin, a sphingolipid enriched in the plasma membrane of cells. Also participates in the hydrolysis of ceramides from the extracellular milieu allowing the production of sphingosine-1-phosphate inside and outside cells. This is Neutral ceramidase (asah2) from Danio rerio (Zebrafish).